We begin with the raw amino-acid sequence, 179 residues long: Apoptosis regulator Bcl-2 homolog (179 aa).

Positions 76 to 95 (ELFKDLINWGRICGFIVFSA) match the BH1 motif. The BH2 motif lies at 126 to 141 (PWMISHGGQEEFLAFS).

Belongs to the Bcl-2 family. Interacts with host BECN1 (via BH3 homology domain); this interaction allows the virus to inhibit BECN1, and thus autophagy. Interacts with host BID. Interacts with host BAX.

It is found in the host mitochondrion. It localises to the host endoplasmic reticulum. Functionally, suppresses apoptosis in host cell to promote the viral replication. Has the ability to potentially bind to all the members of the proapoptotic Bcl-2 family. Inhibits autophagy by interacting with host Beclin 1 (BECN1). In Ornithodoros (relapsing fever ticks), this protein is Apoptosis regulator Bcl-2 homolog.